Consider the following 289-residue polypeptide: Acetyl-coenzyme A carboxylase carboxyl transferase subunit beta (289 aa).

Residues 28–289 (VMTKCPKCKK…QGGGMAVWQS (262 aa)) form the CoA carboxyltransferase N-terminal domain. Zn(2+)-binding residues include cysteine 32, cysteine 35, cysteine 51, and cysteine 54. The segment at 32–54 (CPKCKKIMYTKELLKNLKVCVNC) adopts a C4-type zinc-finger fold.

Belongs to the AccD/PCCB family. In terms of assembly, acetyl-CoA carboxylase is a heterohexamer composed of biotin carboxyl carrier protein (AccB), biotin carboxylase (AccC) and two subunits each of ACCase subunit alpha (AccA) and ACCase subunit beta (AccD). It depends on Zn(2+) as a cofactor.

The protein resides in the cytoplasm. It catalyses the reaction N(6)-carboxybiotinyl-L-lysyl-[protein] + acetyl-CoA = N(6)-biotinyl-L-lysyl-[protein] + malonyl-CoA. It participates in lipid metabolism; malonyl-CoA biosynthesis; malonyl-CoA from acetyl-CoA: step 1/1. Component of the acetyl coenzyme A carboxylase (ACC) complex. Biotin carboxylase (BC) catalyzes the carboxylation of biotin on its carrier protein (BCCP) and then the CO(2) group is transferred by the transcarboxylase to acetyl-CoA to form malonyl-CoA. This is Acetyl-coenzyme A carboxylase carboxyl transferase subunit beta from Bacillus mycoides (strain KBAB4) (Bacillus weihenstephanensis).